We begin with the raw amino-acid sequence, 175 residues long: Ribulose bisphosphate carboxylase small subunit, chloroplastic 2 (175 aa).

Residues 1–46 (MAPAVMASSATTVAPFQGLKSTAGLPISCRSGSTGLSSVSNGGRIR) constitute a chloroplast transit peptide.

It belongs to the RuBisCO small chain family. As to quaternary structure, heterohexadecamer of 8 large and 8 small subunits.

Its subcellular location is the plastid. It localises to the chloroplast. Functionally, ruBisCO catalyzes two reactions: the carboxylation of D-ribulose 1,5-bisphosphate, the primary event in carbon dioxide fixation, as well as the oxidative fragmentation of the pentose substrate. Both reactions occur simultaneously and in competition at the same active site. Although the small subunit is not catalytic it is essential for maximal activity. This is Ribulose bisphosphate carboxylase small subunit, chloroplastic 2 from Triticum aestivum (Wheat).